We begin with the raw amino-acid sequence, 422 residues long: Target of rapamycin complex 2 subunit bit61 (422 aa).

Polar residues predominate over residues 48–69; sequence VTTKESNVGDSDTTENIKSPFN. The segment at 48 to 101 is disordered; that stretch reads VTTKESNVGDSDTTENIKSPFNGQWPFSRRSSQSSSHPVFEETHWSKHSKRPGK. Ser-109, Ser-132, and Ser-201 each carry phosphoserine.

It belongs to the BIT61 family. The target of rapamycin complex 2 (TORC2) is composed of at least bit61, pop3/wat1, sin1, ste20 and tor1. Post-translationally, either Thr-23, Thr-25 or Ser-26 and Ser-78 or Ser-79 are phosphorylated as well.

Its subcellular location is the cytoplasm. The protein resides in the nucleus. Functionally, component of TORC2, which regulates multiple cellular processes to control cell growth in response to environmental signals. TORC2 is required for cell survival under various stress conditions. TORC2 positively controls G1 cell-cycle arrest, sexual development and amino acid uptake. Positively regulates amino acid uptake through the control of expression of amino acid permeases. In Schizosaccharomyces pombe (strain 972 / ATCC 24843) (Fission yeast), this protein is Target of rapamycin complex 2 subunit bit61.